Consider the following 860-residue polypeptide: Protein translocase subunit SecA (860 aa).

Residues Gln87, 105–109 (GEGKT), and Asp514 each bind ATP. Residues Cys846, Cys848, Cys857, and Cys858 each contribute to the Zn(2+) site.

It belongs to the SecA family. Monomer and homodimer. Part of the essential Sec protein translocation apparatus which comprises SecA, SecYEG and auxiliary proteins SecDF. Other proteins may also be involved. It depends on Zn(2+) as a cofactor.

It localises to the cell membrane. The protein localises to the cytoplasm. The catalysed reaction is ATP + H2O + cellular proteinSide 1 = ADP + phosphate + cellular proteinSide 2.. Functionally, part of the Sec protein translocase complex. Interacts with the SecYEG preprotein conducting channel. Has a central role in coupling the hydrolysis of ATP to the transfer of proteins into and across the cell membrane, serving as an ATP-driven molecular motor driving the stepwise translocation of polypeptide chains across the membrane. The chain is Protein translocase subunit SecA from Endomicrobium trichonymphae.